The chain runs to 169 residues: Protein UL138 (169 aa).

A helical transmembrane segment spans residues 8-28 (VGLPIIGVMLVLIVAILCYLA). Positions 109-133 (DRRAGSSSSSSVHVANQRNSVPPPD) are disordered.

Interacts with host TNFR1. Interacts with host MRP1. Interacts with host UAF1/WDR48. Interacts with host STING1.

It is found in the host Golgi apparatus membrane. In terms of biological role, plays an important role in the establishment of latent viral infection. Modulates the expression of several host cell surface receptors such as TNFR1, CD36 or the MRP1 transporter during productive infection. For instance, associates with host MRP1 and induces its lysosomal degradation. Plays an inhibitory role in the host cGAS/STING/TBK1 pathway and upstream of IRF3 phosphorylation and NF-kappa-B leading to inhibition of interferon beta production during both lytic and latent infections. Also participates in the establishment of latency by sustaining an innate immune response through phosphorylation and activation of host STAT1. The protein is Protein UL138 (UL138) of Human cytomegalovirus (strain Merlin) (HHV-5).